The following is a 319-amino-acid chain: MTYARIQGVGSYIPQQILSNADLEKMVNTTDEWIMQRVGVRERHVIANSPDNTTTMAVDAAKRAIEMAGIDPAVIDMIIVGTATAEYYFPSTACLVQKHLNLREDIPAFDINGACAGFVYALSIADQYIRNGGAKHILVIGVDSLTKVVDWKDRSTCILFGDGAGAVILQAHKEPGILNTILHANGDYSDLITAKSGVWERESVPHLHMYGKEVFKLAVTKLGEIVDEIIEKSGLKQSDIDWLIPHQANLRIIEATAKRLGLPRERVILTIEQHGNTSAASIPLALDAAVRAGKIKRGDTLLLEAFGAGLAWGAALLKL.

Active-site residues include C115 and H246. Positions 247–251 (QANLR) are ACP-binding. The active site involves N276.

It belongs to the thiolase-like superfamily. FabH family. As to quaternary structure, homodimer.

The protein localises to the cytoplasm. It carries out the reaction malonyl-[ACP] + acetyl-CoA + H(+) = 3-oxobutanoyl-[ACP] + CO2 + CoA. The protein operates within lipid metabolism; fatty acid biosynthesis. Its function is as follows. Catalyzes the condensation reaction of fatty acid synthesis by the addition to an acyl acceptor of two carbons from malonyl-ACP. Catalyzes the first condensation reaction which initiates fatty acid synthesis and may therefore play a role in governing the total rate of fatty acid production. Possesses both acetoacetyl-ACP synthase and acetyl transacylase activities. Its substrate specificity determines the biosynthesis of branched-chain and/or straight-chain of fatty acids. This Coxiella burnetii (strain Dugway 5J108-111) protein is Beta-ketoacyl-[acyl-carrier-protein] synthase III.